The chain runs to 115 residues: NADH-ubiquinone oxidoreductase chain 3 (115 aa).

3 helical membrane passes run 3-23 (LILTLLINTLLSSVLVLIAFW), 55-75 (FFLVAITFLLFDLEIALLLPL), and 86-106 (TMLTMALILISLLAASLAYEW).

The protein belongs to the complex I subunit 3 family. In terms of assembly, core subunit of respiratory chain NADH dehydrogenase (Complex I) which is composed of 45 different subunits. Interacts with TMEM186. Interacts with TMEM242.

The protein localises to the mitochondrion inner membrane. It carries out the reaction a ubiquinone + NADH + 5 H(+)(in) = a ubiquinol + NAD(+) + 4 H(+)(out). Functionally, core subunit of the mitochondrial membrane respiratory chain NADH dehydrogenase (Complex I) which catalyzes electron transfer from NADH through the respiratory chain, using ubiquinone as an electron acceptor. Essential for the catalytic activity of complex I. The polypeptide is NADH-ubiquinone oxidoreductase chain 3 (Rhinoceros unicornis (Greater Indian rhinoceros)).